Consider the following 213-residue polypeptide: Orotate phosphoribosyltransferase (213 aa).

Residue K26 coordinates 5-phospho-alpha-D-ribose 1-diphosphate. Residue 34–35 (FF) coordinates orotate. Residues 72–73 (YK), R99, K100, K103, H105, and 124–132 (DDVITAGTA) contribute to the 5-phospho-alpha-D-ribose 1-diphosphate site. Positions 128 and 156 each coordinate orotate.

The protein belongs to the purine/pyrimidine phosphoribosyltransferase family. PyrE subfamily. In terms of assembly, homodimer. Mg(2+) serves as cofactor.

It carries out the reaction orotidine 5'-phosphate + diphosphate = orotate + 5-phospho-alpha-D-ribose 1-diphosphate. Its pathway is pyrimidine metabolism; UMP biosynthesis via de novo pathway; UMP from orotate: step 1/2. In terms of biological role, catalyzes the transfer of a ribosyl phosphate group from 5-phosphoribose 1-diphosphate to orotate, leading to the formation of orotidine monophosphate (OMP). The sequence is that of Orotate phosphoribosyltransferase from Serratia proteamaculans (strain 568).